We begin with the raw amino-acid sequence, 357 residues long: GTPase Obg (357 aa).

Residues methionine 1–leucine 159 form the Obg domain. The 175-residue stretch at alanine 160–histidine 334 folds into the OBG-type G domain. GTP-binding positions include glycine 166–serine 173, phenylalanine 191–histidine 195, aspartate 213–glycine 216, asparagine 284–aspartate 287, and serine 315–leucine 317. Residues serine 173 and threonine 193 each coordinate Mg(2+).

Belongs to the TRAFAC class OBG-HflX-like GTPase superfamily. OBG GTPase family. In terms of assembly, monomer. Requires Mg(2+) as cofactor.

The protein localises to the cytoplasm. Its function is as follows. An essential GTPase which binds GTP, GDP and possibly (p)ppGpp with moderate affinity, with high nucleotide exchange rates and a fairly low GTP hydrolysis rate. Plays a role in control of the cell cycle, stress response, ribosome biogenesis and in those bacteria that undergo differentiation, in morphogenesis control. This Acidovorax sp. (strain JS42) protein is GTPase Obg.